The chain runs to 124 residues: Ribonuclease pancreatic (124 aa).

Residues 1 to 24 are disordered; that stretch reads KETAAAKFQRQHMDSSTSSASSSN. Substrate is bound by residues lysine 7 and arginine 10. Catalysis depends on histidine 12, which acts as the Proton acceptor. 4 disulfide bridges follow: cysteine 26-cysteine 84, cysteine 40-cysteine 95, cysteine 58-cysteine 110, and cysteine 65-cysteine 72. Asparagine 34 carries an N-linked (GlcNAc...) asparagine; in river-breed only glycan. Residues 41 to 45, lysine 66, and arginine 85 each bind substrate; that span reads KPVNT. The active-site Proton donor is histidine 119.

The protein belongs to the pancreatic ribonuclease family. In terms of assembly, monomer. Interacts with and forms tight 1:1 complexes with RNH1. Dimerization of two such complexes may occur. Interaction with RNH1 inhibits this protein. Post-translationally, swamp breed ribonuclease do not bind carbohydrate, but there is evidence of a polymorphic form that does. In terms of tissue distribution, pancreas.

The protein localises to the secreted. The catalysed reaction is an [RNA] containing cytidine + H2O = an [RNA]-3'-cytidine-3'-phosphate + a 5'-hydroxy-ribonucleotide-3'-[RNA].. The enzyme catalyses an [RNA] containing uridine + H2O = an [RNA]-3'-uridine-3'-phosphate + a 5'-hydroxy-ribonucleotide-3'-[RNA].. Functionally, endonuclease that catalyzes the cleavage of RNA on the 3' side of pyrimidine nucleotides. Acts on single-stranded and double-stranded RNA. In Bubalus bubalis (Domestic water buffalo), this protein is Ribonuclease pancreatic (RNASE1).